The chain runs to 61 residues: Large ribosomal subunit protein uL30 (61 aa).

This sequence belongs to the universal ribosomal protein uL30 family. As to quaternary structure, part of the 50S ribosomal subunit.

This is Large ribosomal subunit protein uL30 from Chromobacterium violaceum (strain ATCC 12472 / DSM 30191 / JCM 1249 / CCUG 213 / NBRC 12614 / NCIMB 9131 / NCTC 9757 / MK).